The sequence spans 282 residues: Small ribosomal subunit protein uS3 (282 aa).

Residues 43–111 enclose the KH type-2 domain; sequence IRQLMSTGME…QVQLNILEVK (69 aa). A disordered region spans residues 218-282; the sequence is QQAASAPSRG…AAVATEGSDA (65 aa). Basic and acidic residues predominate over residues 230 to 262; the sequence is PRRDGDDRGPRRENSGPRRDGGNLRSQRNDRNE. Positions 263 to 276 are enriched in low complexity; it reads NAAVEAAPAAAAVA.

This sequence belongs to the universal ribosomal protein uS3 family. As to quaternary structure, part of the 30S ribosomal subunit. Forms a tight complex with proteins S10 and S14.

Binds the lower part of the 30S subunit head. Binds mRNA in the 70S ribosome, positioning it for translation. In Renibacterium salmoninarum (strain ATCC 33209 / DSM 20767 / JCM 11484 / NBRC 15589 / NCIMB 2235), this protein is Small ribosomal subunit protein uS3.